A 267-amino-acid chain; its full sequence is Small ribosomal subunit protein uS2 (267 aa).

Residues 232-267 (ATVREEEFADAPAEDAKPARRAPAKKAAADKGEAQA) form a disordered region. Over residues 258–267 (AAADKGEAQA) the composition is skewed to basic and acidic residues.

It belongs to the universal ribosomal protein uS2 family.

This is Small ribosomal subunit protein uS2 from Stenotrophomonas maltophilia (strain R551-3).